The following is a 326-amino-acid chain: NADH-specific methylglyoxal reductase (326 aa).

NAD(+) contacts are provided by residues 20–21 (TW) and Asp54. Tyr59 (proton donor) is an active-site residue. NAD(+) is bound by residues Gln189, 217–222 (YSPLEQ), Gly291, and Gln297.

Belongs to the aldo/keto reductase family. Aldo/keto reductase 11 subfamily. Monomer.

It catalyses the reaction hydroxyacetone + NAD(+) = methylglyoxal + NADH + H(+). Its function is as follows. Catalyzes the NADH-dependent reduction of methylglyoxal (2-oxopropanal) in vitro. It is not known if this activity has physiological significance. Cannot use NADPH as a cosubstrate. Seems to play some role in intestinal colonization. The sequence is that of NADH-specific methylglyoxal reductase (ydjG) from Escherichia coli (strain K12).